A 351-amino-acid chain; its full sequence is MVKALVIINCIILAIGNCGGPLIMRLYFNNGGKRIWFSTFLETAGFPVIFIPLLFSYITRRRSNNVGDSTSFFLIKPRLLIAAVIVGILSGFDNYLYAYGIAYLPVSTAALIIASQLAFIAIFSFFMVKHKFTPFTINAVVLLTVGAAVLGMHTETDKPVHETHKQYITGFLITVAAAVMYAFILPLVELAYQKAKQTMSYTLVLEFQLILCLLASIVSVIGMFIAGDFKALPKEAREFKLGEALFYVVAVFSAIIWQGFFLGAIGLIFSTSSLVSGIMISVLLPITEVLAVIFYHEKFQAEKGLSLALSLWGFVSYFYGEIKSGEDKRRIQQEESQETEQSSLSRPISEC.

Helical transmembrane passes span 4 to 24, 35 to 55, 72 to 92, 108 to 128, 132 to 152, 168 to 188, 207 to 227, 249 to 269, 274 to 294, and 304 to 324; these read ALVI…PLIM, IWFS…PLLF, FFLI…LSGF, TAAL…FFMV, FTPF…VLGM, ITGF…LPLV, FQLI…FIAG, VAVF…GLIF, LVSG…AVIF, and GLSL…EIKS. Residues 45-152 enclose the EamA domain; the sequence is GFPVIFIPLL…LTVGAAVLGM (108 aa). Residues 329 to 351 form a disordered region; that stretch reads RRIQQEESQETEQSSLSRPISEC.

Belongs to the purine permeases (TC 2.A.7.14) family. In terms of tissue distribution, restricted to pollen.

It is found in the membrane. In terms of biological role, may be involved in transport of purine derivatives during pollen germination and tube elongation. This is Purine permease 3 (PUP3) from Arabidopsis thaliana (Mouse-ear cress).